The sequence spans 512 residues: Cytochrome P450 72A15 (512 aa).

A helical transmembrane segment spans residues 2–22 (EISVASVTISVVLAVVSWWIW). Cys-460 contributes to the heme binding site.

The protein belongs to the cytochrome P450 family. Heme is required as a cofactor.

The protein localises to the membrane. The polypeptide is Cytochrome P450 72A15 (CYP72A15) (Arabidopsis thaliana (Mouse-ear cress)).